Reading from the N-terminus, the 184-residue chain is Adenylate kinase (184 aa).

ATP is bound at residue 12-17 (GAGKGT). The tract at residues 32–61 (STGELLRKEIDLDTDLGKQVKDIMNRGELV) is NMP. AMP contacts are provided by residues T33, R38, 59–61 (ELV), 85–88 (GYPR), and Q92. Residues 126 to 132 (IRGRKDD) are LID. An ATP-binding site is contributed by R127. AMP-binding residues include R129 and R140. G168 provides a ligand contact to ATP.

The protein belongs to the adenylate kinase family. Monomer.

It is found in the cytoplasm. The enzyme catalyses AMP + ATP = 2 ADP. It functions in the pathway purine metabolism; AMP biosynthesis via salvage pathway; AMP from ADP: step 1/1. In terms of biological role, catalyzes the reversible transfer of the terminal phosphate group between ATP and AMP. Plays an important role in cellular energy homeostasis and in adenine nucleotide metabolism. The protein is Adenylate kinase of Prochlorococcus marinus subsp. pastoris (strain CCMP1986 / NIES-2087 / MED4).